The following is a 745-amino-acid chain: 1,4-alpha-glucan branching enzyme GlgB (745 aa).

The active-site Nucleophile is the D416. The active-site Proton donor is E469.

The protein belongs to the glycosyl hydrolase 13 family. GlgB subfamily. In terms of assembly, monomer.

It carries out the reaction Transfers a segment of a (1-&gt;4)-alpha-D-glucan chain to a primary hydroxy group in a similar glucan chain.. It functions in the pathway glycan biosynthesis; glycogen biosynthesis. In terms of biological role, catalyzes the formation of the alpha-1,6-glucosidic linkages in glycogen by scission of a 1,4-alpha-linked oligosaccharide from growing alpha-1,4-glucan chains and the subsequent attachment of the oligosaccharide to the alpha-1,6 position. The sequence is that of 1,4-alpha-glucan branching enzyme GlgB from Shewanella sp. (strain MR-7).